The chain runs to 136 residues: Ribosome-binding factor A (136 aa).

Positions 1–22 (MNTAGPAGKLAGHAASGPTQRQ) are disordered.

Belongs to the RbfA family. As to quaternary structure, monomer. Binds 30S ribosomal subunits, but not 50S ribosomal subunits or 70S ribosomes.

Its subcellular location is the cytoplasm. One of several proteins that assist in the late maturation steps of the functional core of the 30S ribosomal subunit. Associates with free 30S ribosomal subunits (but not with 30S subunits that are part of 70S ribosomes or polysomes). Required for efficient processing of 16S rRNA. May interact with the 5'-terminal helix region of 16S rRNA. The sequence is that of Ribosome-binding factor A from Gluconacetobacter diazotrophicus (strain ATCC 49037 / DSM 5601 / CCUG 37298 / CIP 103539 / LMG 7603 / PAl5).